The following is a 298-amino-acid chain: ATP phosphoribosyltransferase (298 aa).

This sequence belongs to the ATP phosphoribosyltransferase family. Long subfamily. It depends on Mg(2+) as a cofactor.

The protein resides in the cytoplasm. The enzyme catalyses 1-(5-phospho-beta-D-ribosyl)-ATP + diphosphate = 5-phospho-alpha-D-ribose 1-diphosphate + ATP. It functions in the pathway amino-acid biosynthesis; L-histidine biosynthesis; L-histidine from 5-phospho-alpha-D-ribose 1-diphosphate: step 1/9. Feedback inhibited by histidine. Functionally, catalyzes the condensation of ATP and 5-phosphoribose 1-diphosphate to form N'-(5'-phosphoribosyl)-ATP (PR-ATP). Has a crucial role in the pathway because the rate of histidine biosynthesis seems to be controlled primarily by regulation of HisG enzymatic activity. This chain is ATP phosphoribosyltransferase, found in Tolumonas auensis (strain DSM 9187 / NBRC 110442 / TA 4).